A 144-amino-acid chain; its full sequence is Large ribosomal subunit protein uL13 (144 aa).

The protein belongs to the universal ribosomal protein uL13 family. In terms of assembly, part of the 50S ribosomal subunit.

In terms of biological role, this protein is one of the early assembly proteins of the 50S ribosomal subunit, although it is not seen to bind rRNA by itself. It is important during the early stages of 50S assembly. The polypeptide is Large ribosomal subunit protein uL13 (Nitratidesulfovibrio vulgaris (strain DSM 19637 / Miyazaki F) (Desulfovibrio vulgaris)).